Consider the following 349-residue polypeptide: MDLFDRINKLKEEGLDQIKQAENQKMLDKIRVELMGRKGELTQILHSMKDIAPENRPKVGQEVNQVRDILQKQLDEAKDHFLQAIIAQKLEEEKIDVTLPGREGHLGSKHPINIILDDLESYFIGMGYKVVQGPEIETDHYCFEMMNLPKDHPARDMQATFYIDNEDLLRTQTSGDQARVLEKHDFSKGPLKMVGPGKVYRRDDDDATHSHQFQQMEGLVVDKNVTMSDLKGTLEMIAKHVFGQDRKTRLRPSYFPFTEPSVEMDVSCFNCDGKGCPICKYTGWIEVLGAGMVHPNVLENAGVDSTVYGGFAFGLGLDRFAILKYGISDIRDFYTNDVRFLAQFRKEED.

Residue glutamate 259 participates in Mg(2+) binding.

This sequence belongs to the class-II aminoacyl-tRNA synthetase family. Phe-tRNA synthetase alpha subunit type 1 subfamily. Tetramer of two alpha and two beta subunits. It depends on Mg(2+) as a cofactor.

The protein localises to the cytoplasm. It catalyses the reaction tRNA(Phe) + L-phenylalanine + ATP = L-phenylalanyl-tRNA(Phe) + AMP + diphosphate + H(+). The polypeptide is Phenylalanine--tRNA ligase alpha subunit (Lactobacillus gasseri (strain ATCC 33323 / DSM 20243 / BCRC 14619 / CIP 102991 / JCM 1131 / KCTC 3163 / NCIMB 11718 / NCTC 13722 / AM63)).